The sequence spans 112 residues: T cell receptor alpha variable 21 (112 aa).

The first 19 residues, 1-19, serve as a signal peptide directing secretion; it reads METLLGLLILWLQLQWVSS. The region spanning 21-112 is the Ig-like domain; it reads QEVTQIPAAL…DSATYLCAVR (92 aa). 2 N-linked (GlcNAc...) asparagine glycosylation sites follow: Asn41 and Asn82. A disulfide bridge connects residues Cys42 and Cys109.

In terms of assembly, alpha-beta TR is a heterodimer composed of an alpha and beta chain; disulfide-linked. The alpha-beta TR is associated with the transmembrane signaling CD3 coreceptor proteins to form the TR-CD3 (TcR or TCR). The assembly of alpha-beta TR heterodimers with CD3 occurs in the endoplasmic reticulum where a single alpha-beta TR heterodimer associates with one CD3D-CD3E heterodimer, one CD3G-CD3E heterodimer and one CD247 homodimer forming a stable octameric structure. CD3D-CD3E and CD3G-CD3E heterodimers preferentially associate with TR alpha and TR beta chains, respectively. The association of the CD247 homodimer is the last step of TcR assembly in the endoplasmic reticulum and is required for transport to the cell surface.

It localises to the cell membrane. In terms of biological role, v region of the variable domain of T cell receptor (TR) alpha chain that participates in the antigen recognition. Alpha-beta T cell receptors are antigen specific receptors which are essential to the immune response and are present on the cell surface of T lymphocytes. Recognize peptide-major histocompatibility (MH) (pMH) complexes that are displayed by antigen presenting cells (APC), a prerequisite for efficient T cell adaptive immunity against pathogens. Binding of alpha-beta TR to pMH complex initiates TR-CD3 clustering on the cell surface and intracellular activation of LCK that phosphorylates the ITAM motifs of CD3G, CD3D, CD3E and CD247 enabling the recruitment of ZAP70. In turn ZAP70 phosphorylates LAT, which recruits numerous signaling molecules to form the LAT signalosome. The LAT signalosome propagates signal branching to three major signaling pathways, the calcium, the mitogen-activated protein kinase (MAPK) kinase and the nuclear factor NF-kappa-B (NF-kB) pathways, leading to the mobilization of transcription factors that are critical for gene expression and essential for T cell growth and differentiation. The T cell repertoire is generated in the thymus, by V-(D)-J rearrangement. This repertoire is then shaped by intrathymic selection events to generate a peripheral T cell pool of self-MH restricted, non-autoaggressive T cells. Post-thymic interaction of alpha-beta TR with the pMH complexes shapes TR structural and functional avidity. The polypeptide is T cell receptor alpha variable 21 (Homo sapiens (Human)).